The sequence spans 268 residues: 3-methyl-2-oxobutanoate hydroxymethyltransferase (268 aa).

Residues Asp-46 and Asp-85 each contribute to the Mg(2+) site. Residues 46 to 47 (DS), Asp-85, and Lys-115 each bind 3-methyl-2-oxobutanoate. Glu-117 contacts Mg(2+). Glu-184 acts as the Proton acceptor in catalysis.

The protein belongs to the PanB family. Homodecamer; pentamer of dimers. Mg(2+) serves as cofactor.

Its subcellular location is the cytoplasm. It catalyses the reaction 3-methyl-2-oxobutanoate + (6R)-5,10-methylene-5,6,7,8-tetrahydrofolate + H2O = 2-dehydropantoate + (6S)-5,6,7,8-tetrahydrofolate. It participates in cofactor biosynthesis; (R)-pantothenate biosynthesis; (R)-pantoate from 3-methyl-2-oxobutanoate: step 1/2. Functionally, catalyzes the reversible reaction in which hydroxymethyl group from 5,10-methylenetetrahydrofolate is transferred onto alpha-ketoisovalerate to form ketopantoate. The chain is 3-methyl-2-oxobutanoate hydroxymethyltransferase from Magnetococcus marinus (strain ATCC BAA-1437 / JCM 17883 / MC-1).